We begin with the raw amino-acid sequence, 575 residues long: Proline--tRNA ligase 1 (575 aa).

Belongs to the class-II aminoacyl-tRNA synthetase family. ProS type 1 subfamily. As to quaternary structure, homodimer.

The protein localises to the cytoplasm. It carries out the reaction tRNA(Pro) + L-proline + ATP = L-prolyl-tRNA(Pro) + AMP + diphosphate. Its function is as follows. Catalyzes the attachment of proline to tRNA(Pro) in a two-step reaction: proline is first activated by ATP to form Pro-AMP and then transferred to the acceptor end of tRNA(Pro). As ProRS can inadvertently accommodate and process non-cognate amino acids such as alanine and cysteine, to avoid such errors it has two additional distinct editing activities against alanine. One activity is designated as 'pretransfer' editing and involves the tRNA(Pro)-independent hydrolysis of activated Ala-AMP. The other activity is designated 'posttransfer' editing and involves deacylation of mischarged Ala-tRNA(Pro). The misacylated Cys-tRNA(Pro) is not edited by ProRS. This is Proline--tRNA ligase 1 from Anaeromyxobacter dehalogenans (strain 2CP-C).